Reading from the N-terminus, the 491-residue chain is Histamine H1 receptor (491 aa).

The Extracellular portion of the chain corresponds to Met1–Pro30. Residues Asn5 and Asn18 are each glycosylated (N-linked (GlcNAc...) asparagine). The helical transmembrane segment at Leu31–Tyr51 threads the bilayer. The Cytoplasmic segment spans residues Ala52–Leu65. The chain crosses the membrane as a helical span at residues Tyr66 to Leu90. Residues Met91 to Arg98 are Extracellular-facing. Residues Pro99–Ile124 traverse the membrane as a helical segment. Cys101 and Cys181 form a disulfide bridge. Residues Asp108 and Thr113 each coordinate histamine. Positions Asp108–Thr113 are important for agonist binding. Topologically, residues Asp125–Ala145 are cytoplasmic. Thr141 and Thr143 each carry phosphothreonine. Residues Ser146–Gly165 traverse the membrane as a helical segment. At Trp166–Thr189 the chain is on the extracellular side. A helical membrane pass occupies residues Trp190–Ala212. Histamine is bound at residue Asn199. The Cytoplasmic portion of the chain corresponds to Lys213 to Gln420. At Ser231 the chain carries Phosphoserine. 2 disordered regions span residues Gln246–Lys297 and Gln360–Ser385. The segment covering Pro252 to Lys262 has biased composition (basic and acidic residues). Ser384, Ser400, and Ser402 each carry phosphoserine. A helical membrane pass occupies residues Leu421 to Phe444. The important for agonist binding stretch occupies residues Phe428–Trp432. Tyr435 is a histamine binding site. Cys445 and Cys448 are joined by a disulfide. Over Cys445–Asn450 the chain is Extracellular. Residues Gln451–Pro473 traverse the membrane as a helical segment. Residues Leu474–Ser491 are Cytoplasmic-facing.

The protein belongs to the G-protein coupled receptor 1 family. Post-translationally, phosphorylation at sites in the second and third cytoplasmic loops independently contribute to agonist-induced receptor down-regulation. Brain, lung, small intestine, uterus, adrenal medulla and spleen.

It localises to the cell membrane. In terms of biological role, G-protein-coupled receptor for histamine, a biogenic amine that functions as an immune modulator and a neurotransmitter. Through the H1 receptor, histamine mediates the contraction of smooth muscles and increases capillary permeability due to contraction of terminal venules. Also mediates neurotransmission in the central nervous system and thereby regulates circadian rhythms, emotional and locomotor activities as well as cognitive functions. This Bos taurus (Bovine) protein is Histamine H1 receptor.